The chain runs to 421 residues: Histidine--tRNA ligase (421 aa).

The protein belongs to the class-II aminoacyl-tRNA synthetase family.

It localises to the cytoplasm. The enzyme catalyses tRNA(His) + L-histidine + ATP = L-histidyl-tRNA(His) + AMP + diphosphate + H(+). In Pyrobaculum islandicum (strain DSM 4184 / JCM 9189 / GEO3), this protein is Histidine--tRNA ligase.